A 376-amino-acid chain; its full sequence is Putative E3 ubiquitin-protein ligase XBAT34 (376 aa).

ANK repeat units lie at residues 41–71 and 77–106; these read LGRTPLILACTNDDLYDVAKTLLELGSNVNA and NGGTPLHHAAKRGLVHTVKLLLSHGANPLV. An RING-type zinc finger spans residues 325 to 364; that stretch reads CVICVDAPSEAVCVPCGHVAGCISCLKEIENKKMGCPVCR.

The catalysed reaction is S-ubiquitinyl-[E2 ubiquitin-conjugating enzyme]-L-cysteine + [acceptor protein]-L-lysine = [E2 ubiquitin-conjugating enzyme]-L-cysteine + N(6)-ubiquitinyl-[acceptor protein]-L-lysine.. It participates in protein modification; protein ubiquitination. In terms of biological role, no E3 ubiquitin-protein ligase activity observed when associated with the E2 enzyme UBC8 in vitro. The sequence is that of Putative E3 ubiquitin-protein ligase XBAT34 (XBAT34) from Arabidopsis thaliana (Mouse-ear cress).